The following is a 325-amino-acid chain: Diacylglycerol acyltransferase/mycolyltransferase Ag85B (325 aa).

The signal sequence occupies residues 1 to 40; it reads MTDVSRKIRAWGRRLMIGTAAAVVLPGLVGLAGGAATAGA. 82 to 83 lines the substrate pocket; the sequence is LR. A fibronectin-binding region spans residues 98–108; that stretch reads FEWYYQSGLSI. Cysteine 127 and cysteine 132 are disulfide-bonded. Residues serine 166 and aspartate 194 each coordinate substrate. The Nucleophile role is filled by serine 166. Glutamate 270 is an active-site residue. Residues 272–275, lysine 279, and 302–304 contribute to the substrate site; these read FVRS and HSW. Residue histidine 302 is part of the active site.

Belongs to the mycobacterial A85 antigen family.

Its subcellular location is the secreted. The enzyme catalyses 2 alpha,alpha'-trehalose 6-mycolate = alpha,alpha'-trehalose 6,6'-bismycolate + alpha,alpha-trehalose. It catalyses the reaction an acyl-CoA + a 1,2-diacyl-sn-glycerol = a triacyl-sn-glycerol + CoA. The antigen 85 proteins (FbpA, FbpB, FbpC) are responsible for the high affinity of mycobacteria for fibronectin, a large adhesive glycoprotein, which facilitates the attachment of M.tuberculosis to murine alveolar macrophages (AMs). They also help to maintain the integrity of the cell wall by catalyzing the transfer of mycolic acids to cell wall arabinogalactan and through the synthesis of alpha,alpha-trehalose dimycolate (TDM, cord factor). They catalyze the transfer of a mycoloyl residue from one molecule of alpha,alpha-trehalose monomycolate (TMM) to another TMM, leading to the formation of TDM. This Mycobacterium tuberculosis (strain ATCC 25177 / H37Ra) protein is Diacylglycerol acyltransferase/mycolyltransferase Ag85B (fbpB).